The sequence spans 643 residues: NAD-dependent malic enzyme, mitochondrial (643 aa).

The transit peptide at 1 to 38 (PRVRSFIAHQSGITSVIRRSPDIAHRMVRSLSVSSQRN) directs the protein to the mitochondrion. The fumarate site is built by Gln116, Arg119, and Arg143. Tyr164 acts as the Proton donor in catalysis. Arg219 contacts (S)-malate. Arg219 is a binding site for NAD(+). Lys237 (proton acceptor) is an active-site residue. 2 residues coordinate a divalent metal cation: Glu309 and Asp310. The NAD(+) site is built by Asn313, Asp333, Ala366, Ala369, and Asn472. Asp333 provides a ligand contact to a divalent metal cation. Residues Asn472 and Asn516 each contribute to the (S)-malate site.

This sequence belongs to the malic enzymes family. In terms of assembly, homotetramer. Mg(2+) is required as a cofactor. It depends on Mn(2+) as a cofactor.

The protein resides in the mitochondrion matrix. The enzyme catalyses (S)-malate + NAD(+) = pyruvate + CO2 + NADH. It carries out the reaction oxaloacetate + H(+) = pyruvate + CO2. Its activity is regulated as follows. Subject to allosteric activation by fumarate. In terms of biological role, NAD-dependent mitochondrial malic enzyme that catalyzes the oxidative decarboxylation of malate to pyruvate. This is NAD-dependent malic enzyme, mitochondrial from Ascaris suum (Pig roundworm).